The following is a 323-amino-acid chain: Beta-ketoacyl-[acyl-carrier-protein] synthase III (323 aa).

Active-site residues include cysteine 113 and histidine 250. The interval 251–255 is ACP-binding; sequence QANRR. The active site involves asparagine 280.

It belongs to the thiolase-like superfamily. FabH family. In terms of assembly, homodimer.

It is found in the cytoplasm. It catalyses the reaction malonyl-[ACP] + acetyl-CoA + H(+) = 3-oxobutanoyl-[ACP] + CO2 + CoA. It functions in the pathway lipid metabolism; fatty acid biosynthesis. In terms of biological role, catalyzes the condensation reaction of fatty acid synthesis by the addition to an acyl acceptor of two carbons from malonyl-ACP. Catalyzes the first condensation reaction which initiates fatty acid synthesis and may therefore play a role in governing the total rate of fatty acid production. Possesses both acetoacetyl-ACP synthase and acetyl transacylase activities. Its substrate specificity determines the biosynthesis of branched-chain and/or straight-chain of fatty acids. The chain is Beta-ketoacyl-[acyl-carrier-protein] synthase III from Rhizobium rhizogenes (strain K84 / ATCC BAA-868) (Agrobacterium radiobacter).